The sequence spans 123 residues: MADLAKIVEDLSNLTLLEAAELSKLLEEKWGVSAAAPVAVAAVAGAAAPAAEEKTEFDVILVEGGAQKINVIKEVRALTGLGLKEAKDLVEGAPKPIKEGASKEEAEKIKSQLEAAGAKVELK.

The protein belongs to the bacterial ribosomal protein bL12 family. Homodimer. Part of the ribosomal stalk of the 50S ribosomal subunit. Forms a multimeric L10(L12)X complex, where L10 forms an elongated spine to which 2 to 4 L12 dimers bind in a sequential fashion. Binds GTP-bound translation factors.

Forms part of the ribosomal stalk which helps the ribosome interact with GTP-bound translation factors. Is thus essential for accurate translation. The chain is Large ribosomal subunit protein bL12 from Bartonella tribocorum (strain CIP 105476 / IBS 506).